We begin with the raw amino-acid sequence, 202 residues long: LexA repressor (202 aa).

A DNA-binding region (H-T-H motif) is located at residues 28 to 48 (RAEIAAQLGFRSPNAAEEHLK). Active-site for autocatalytic cleavage activity residues include serine 119 and lysine 156.

The protein belongs to the peptidase S24 family. Homodimer.

It catalyses the reaction Hydrolysis of Ala-|-Gly bond in repressor LexA.. Its function is as follows. Represses a number of genes involved in the response to DNA damage (SOS response), including recA and lexA. Binds to the 16 bp palindromic sequence 5'-CTGTATATATATACAG-3'. In the presence of single-stranded DNA, RecA interacts with LexA causing an autocatalytic cleavage which disrupts the DNA-binding part of LexA, leading to derepression of the SOS regulon and eventually DNA repair. This chain is LexA repressor, found in Erwinia tasmaniensis (strain DSM 17950 / CFBP 7177 / CIP 109463 / NCPPB 4357 / Et1/99).